We begin with the raw amino-acid sequence, 299 residues long: Protoheme IX farnesyltransferase 1 (299 aa).

The next 8 membrane-spanning stretches (helical) occupy residues valine 25–valine 45, tryptophan 47–valine 67, threonine 95–phenylalanine 115, leucine 119–leucine 139, isoleucine 147–glycine 167, proline 173–isoleucine 193, alanine 226–isoleucine 246, and isoleucine 279–leucine 299.

The protein belongs to the UbiA prenyltransferase family. Protoheme IX farnesyltransferase subfamily.

The protein localises to the cell inner membrane. It catalyses the reaction heme b + (2E,6E)-farnesyl diphosphate + H2O = Fe(II)-heme o + diphosphate. Its pathway is porphyrin-containing compound metabolism; heme O biosynthesis; heme O from protoheme: step 1/1. Its function is as follows. Converts heme B (protoheme IX) to heme O by substitution of the vinyl group on carbon 2 of heme B porphyrin ring with a hydroxyethyl farnesyl side group. This is Protoheme IX farnesyltransferase 1 from Pseudomonas fluorescens (strain Pf0-1).